A 249-amino-acid polypeptide reads, in one-letter code: Phosphomannomutase 1 (249 aa).

The active-site Nucleophile is the aspartate 12. Residues aspartate 12 and aspartate 14 each coordinate Mg(2+). Residue aspartate 14 is the Proton donor/acceptor of the active site. Arginine 21, arginine 123, arginine 134, arginine 141, serine 179, and aspartate 181 together coordinate alpha-D-mannose 1-phosphate. Mg(2+)-binding residues include aspartate 209, aspartate 223, and threonine 227.

Belongs to the eukaryotic PMM family. In terms of assembly, homodimer.

It localises to the cytoplasm. It catalyses the reaction alpha-D-mannose 1-phosphate = D-mannose 6-phosphate. It functions in the pathway nucleotide-sugar biosynthesis; GDP-alpha-D-mannose biosynthesis; alpha-D-mannose 1-phosphate from D-fructose 6-phosphate: step 2/2. Functionally, involved in the synthesis of the GDP-mannose and dolichol-phosphate-mannose required for a number of critical mannosyl transfer reactions. This chain is Phosphomannomutase 1 (pmmA), found in Dictyostelium discoideum (Social amoeba).